Consider the following 124-residue polypeptide: Holo-[acyl-carrier-protein] synthase (124 aa).

Mg(2+) is bound by residues aspartate 8 and glutamate 56.

It belongs to the P-Pant transferase superfamily. AcpS family. Mg(2+) serves as cofactor.

The protein localises to the cytoplasm. It catalyses the reaction apo-[ACP] + CoA = holo-[ACP] + adenosine 3',5'-bisphosphate + H(+). Functionally, transfers the 4'-phosphopantetheine moiety from coenzyme A to a Ser of acyl-carrier-protein. The chain is Holo-[acyl-carrier-protein] synthase from Nitratidesulfovibrio vulgaris (strain DP4) (Desulfovibrio vulgaris).